The following is a 274-amino-acid chain: Octanoyl-[GcvH]:protein N-octanoyltransferase (274 aa).

A BPL/LPL catalytic domain is found at 37 to 242 (QGNDAVVRTW…AMKTLGATLS (206 aa)). Catalysis depends on Cys141, which acts as the Acyl-thioester intermediate.

This sequence belongs to the octanoyltransferase LipL family.

It carries out the reaction N(6)-octanoyl-L-lysyl-[glycine-cleavage complex H protein] + L-lysyl-[lipoyl-carrier protein] = N(6)-octanoyl-L-lysyl-[lipoyl-carrier protein] + L-lysyl-[glycine-cleavage complex H protein]. It participates in protein modification; protein lipoylation via endogenous pathway; protein N(6)-(lipoyl)lysine from octanoyl-[acyl-carrier-protein]. Its function is as follows. Catalyzes the amidotransfer (transamidation) of the octanoyl moiety from octanoyl-GcvH to the lipoyl domain of the E2 subunit of lipoate-dependent enzymes. The sequence is that of Octanoyl-[GcvH]:protein N-octanoyltransferase from Macrococcus caseolyticus (strain JCSC5402) (Macrococcoides caseolyticum).